Here is a 322-residue protein sequence, read N- to C-terminus: Probable ethanolamine-phosphate cytidylyltransferase (322 aa).

The protein belongs to the cytidylyltransferase family.

It catalyses the reaction phosphoethanolamine + CTP + H(+) = CDP-ethanolamine + diphosphate. It participates in phospholipid metabolism; phosphatidylethanolamine biosynthesis; phosphatidylethanolamine from ethanolamine: step 2/3. The polypeptide is Probable ethanolamine-phosphate cytidylyltransferase (MUQ1) (Encephalitozoon cuniculi (strain GB-M1) (Microsporidian parasite)).